A 193-amino-acid polypeptide reads, in one-letter code: Imidazoleglycerol-phosphate dehydratase (193 aa).

This sequence belongs to the imidazoleglycerol-phosphate dehydratase family.

It localises to the cytoplasm. It carries out the reaction D-erythro-1-(imidazol-4-yl)glycerol 3-phosphate = 3-(imidazol-4-yl)-2-oxopropyl phosphate + H2O. It functions in the pathway amino-acid biosynthesis; L-histidine biosynthesis; L-histidine from 5-phospho-alpha-D-ribose 1-diphosphate: step 6/9. The sequence is that of Imidazoleglycerol-phosphate dehydratase from Sulfolobus acidocaldarius (strain ATCC 33909 / DSM 639 / JCM 8929 / NBRC 15157 / NCIMB 11770).